The following is a 538-amino-acid chain: Pyruvate kinase (538 aa).

At Ser-45 the chain carries Phosphoserine. Residue Arg-72 coordinates substrate. The K(+) site is built by Asn-74, Ser-76, Asp-107, and Thr-108. ATP is bound at residue 74–77 (NFSH). The ATP site is built by Arg-114 and Lys-200. Glu-265 provides a ligand contact to Mg(2+). The substrate site is built by Gly-288, Asp-289, and Thr-321. Asp-289 contributes to the Mg(2+) binding site.

Belongs to the pyruvate kinase family. Homotetramer. It depends on Mg(2+) as a cofactor. Requires K(+) as cofactor.

The catalysed reaction is pyruvate + ATP = phosphoenolpyruvate + ADP + H(+). It functions in the pathway carbohydrate degradation; glycolysis; pyruvate from D-glyceraldehyde 3-phosphate: step 5/5. This Hypocrea jecorina (Trichoderma reesei) protein is Pyruvate kinase (pki1).